The sequence spans 322 residues: Beta-carotene 3-hydroxylase, chloroplastic (322 aa).

The transit peptide at 1–68 (TFHKPVSGAS…AQRCSLVRLR (68 aa)) directs the protein to the chloroplast. The next 2 membrane-spanning stretches (helical) occupy residues 118 to 138 (QAAA…ATYL) and 149 to 169 (AVPW…ALGM). The region spanning 164–286 (GGALGMEMYA…AHQLHHSGKY (123 aa)) is the Fatty acid hydroxylase domain. A Histidine box-1 motif is present at residues 177–182 (HKAIWH). Residues 191–195 (HKSHH) carry the Histidine box-2 motif. A run of 2 helical transmembrane segments spans residues 207–227 (LFAI…FWLP) and 231–251 (GAAC…YMFV). Residues 252–257 (HDGLVH) carry the Histidine box-3 motif. A Histidine box-4 motif is present at residues 278-282 (HQLHH).

Belongs to the sterol desaturase family.

Its subcellular location is the plastid. It is found in the chloroplast membrane. It catalyses the reaction all-trans-beta-carotene + 4 reduced [2Fe-2S]-[ferredoxin] + 2 O2 + 4 H(+) = all-trans-zeaxanthin + 4 oxidized [2Fe-2S]-[ferredoxin] + 2 H2O. Nonheme diiron monooxygenase involved in the biosynthesis of astaxanthin. Hydroxylates beta-ring of beta-carotene and catalyzes the conversion of canthaxanthin to astaxanthin. Uses ferredoxin as an electron donor. This Haematococcus lacustris (Green alga) protein is Beta-carotene 3-hydroxylase, chloroplastic (CRTZ).